Consider the following 977-residue polypeptide: Fc receptor-like protein 5 (977 aa).

An N-terminal signal peptide occupies residues 1–15 (MLLWVILLVLAPVSG). Residues 16-851 (QFARTPRPII…ANRSGPFATG (836 aa)) are Extracellular-facing. Ig-like C2-type domains are found at residues 23–101 (PIIF…LDFS), 188–271 (PFTR…SVIS), 287–374 (PVLT…LSVT), 380–463 (PVLN…KAVS), 473–556 (PVLT…EVVS), 566–651 (PILT…ISLS), 659–744 (PILT…VTLK), and 752–834 (PVLT…ETVT). 3 disulfides stabilise this stretch: C44–C85, C211–C260, and C308–C355. A glycan (N-linked (GlcNAc...) asparagine) is linked at N383. Disulfide bonds link C401–C448, C494–C541, C587–C634, C680–C727, and C773–C819. Residues 852–872 (VAGGLLSIAGLAAGALLLYCW) form a helical membrane-spanning segment. Over 873 to 977 (LSRKAGRKPA…LFLASSAPHR (105 aa)) the chain is Cytoplasmic. The tract at residues 879–898 (RKPASDPARSPSDSDSQEPT) is disordered. Positions 883-892 (SDPARSPSDS) are enriched in low complexity. Short sequence motifs (ITIM motif) lie at residues 897-902 (PTYHNV), 910-915 (PVYTNA), 922-927 (VVYSEV), and 952-957 (IIYSEV).

In terms of assembly, interacts with CR2. Interacts with CD19. Expressed in marginal zone B-cells, immunoblasts, tonsillar germinal center centrocytes and in the intraepithelial and interfollicular regions of the tonsil. Expressed in many lymphoma cell lines and on hairy cell leukemia cells. Isoform 1, isoform 3, isoform 4 and isoform 5 are detected in lymph node, spleen, bone marrow, and small intestine with preponderance of isoform 3. Expressed in mature and memory B-cells and down-regulated in germinal center cells (at protein level).

The protein resides in the cell membrane. Plays an important role in B-cell response to antigen that acts both as a negative or positive coreceptor. Inhibits B-cell receptor (BCR) signaling in the absence of CR2 stimulation but engagement with CR2 and the BCR lead to a superior calcium response compared to CR2 and BCR costimulation. May be involved in B-cell development and differentiation in peripheral lymphoid organs and may be useful markers of B-cell stages. May have an immunoregulatory role in marginal zone B-cells. May play a role in fertilization. The polypeptide is Fc receptor-like protein 5 (FCRL5) (Homo sapiens (Human)).